A 639-amino-acid polypeptide reads, in one-letter code: Chaperone protein DnaK (639 aa).

Threonine 196 is subject to Phosphothreonine; by autocatalysis. Positions 592-639 (ASSLYQTPDAGAPGASGPSAGGEPETGKKGGDGEVQNAEYEVIDGNDK) are disordered. The span at 601 to 613 (AGAPGASGPSAGG) shows a compositional bias: low complexity.

Belongs to the heat shock protein 70 family.

In terms of biological role, acts as a chaperone. The sequence is that of Chaperone protein DnaK from Chlorobium limicola (strain DSM 245 / NBRC 103803 / 6330).